We begin with the raw amino-acid sequence, 519 residues long: Probable DNA ligase (519 aa).

E221 is an ATP binding site. Residue K223 is the N6-AMP-lysine intermediate of the active site. The ATP site is built by R228, R243, E272, F312, R384, and K390.

Belongs to the ATP-dependent DNA ligase family. Requires Mg(2+) as cofactor.

The catalysed reaction is ATP + (deoxyribonucleotide)n-3'-hydroxyl + 5'-phospho-(deoxyribonucleotide)m = (deoxyribonucleotide)n+m + AMP + diphosphate.. Its function is as follows. DNA ligase that seals nicks in double-stranded DNA during DNA replication, DNA recombination and DNA repair. The sequence is that of Probable DNA ligase from Mycolicibacterium paratuberculosis (strain ATCC BAA-968 / K-10) (Mycobacterium paratuberculosis).